Consider the following 355-residue polypeptide: UDP-N-acetylglucosamine--N-acetylmuramyl-(pentapeptide) pyrophosphoryl-undecaprenol N-acetylglucosamine transferase (355 aa).

UDP-N-acetyl-alpha-D-glucosamine contacts are provided by residues 15–17 (TGG), asparagine 127, arginine 163, serine 191, isoleucine 244, 263–268 (ALTVSE), and glutamine 288.

Belongs to the glycosyltransferase 28 family. MurG subfamily.

The protein localises to the cell inner membrane. It catalyses the reaction di-trans,octa-cis-undecaprenyl diphospho-N-acetyl-alpha-D-muramoyl-L-alanyl-D-glutamyl-meso-2,6-diaminopimeloyl-D-alanyl-D-alanine + UDP-N-acetyl-alpha-D-glucosamine = di-trans,octa-cis-undecaprenyl diphospho-[N-acetyl-alpha-D-glucosaminyl-(1-&gt;4)]-N-acetyl-alpha-D-muramoyl-L-alanyl-D-glutamyl-meso-2,6-diaminopimeloyl-D-alanyl-D-alanine + UDP + H(+). The protein operates within cell wall biogenesis; peptidoglycan biosynthesis. Its function is as follows. Cell wall formation. Catalyzes the transfer of a GlcNAc subunit on undecaprenyl-pyrophosphoryl-MurNAc-pentapeptide (lipid intermediate I) to form undecaprenyl-pyrophosphoryl-MurNAc-(pentapeptide)GlcNAc (lipid intermediate II). The sequence is that of UDP-N-acetylglucosamine--N-acetylmuramyl-(pentapeptide) pyrophosphoryl-undecaprenol N-acetylglucosamine transferase from Salmonella dublin (strain CT_02021853).